Here is a 181-residue protein sequence, read N- to C-terminus: Probable pyruvoyl-dependent arginine decarboxylase (181 aa).

At Ser-43 the chain carries Pyruvic acid (Ser).

This sequence belongs to the PdaD family. It depends on pyruvate as a cofactor.

The enzyme catalyses L-arginine + H(+) = agmatine + CO2. The chain is Probable pyruvoyl-dependent arginine decarboxylase from Chlorobaculum tepidum (strain ATCC 49652 / DSM 12025 / NBRC 103806 / TLS) (Chlorobium tepidum).